The following is a 330-amino-acid chain: Aspartate--ammonia ligase (330 aa).

Belongs to the class-II aminoacyl-tRNA synthetase family. AsnA subfamily.

Its subcellular location is the cytoplasm. The enzyme catalyses L-aspartate + NH4(+) + ATP = L-asparagine + AMP + diphosphate + H(+). The protein operates within amino-acid biosynthesis; L-asparagine biosynthesis; L-asparagine from L-aspartate (ammonia route): step 1/1. The protein is Aspartate--ammonia ligase of Salmonella newport (strain SL254).